The following is a 760-amino-acid chain: Leucine-rich repeat extensin-like protein 3 (760 aa).

A signal peptide spans 1-20 (MKKTIQILLFFFFLINLTNA). A glycan (N-linked (GlcNAc...) asparagine) is linked at Asn-16. The stretch at 21-45 (LSISSDGGVLSDNEVRHIQRRQLLE) is one LRR 1 repeat. N-linked (GlcNAc...) asparagine glycosylation is found at Asn-86 and Asn-98. LRR repeat units lie at residues 113-137 (IRTV…LGLL), 138-160 (SDLA…RFNR), 161-185 (LKLL…VLQL), 186-209 (PSLK…LFSK), 211-232 (LDAI…FGDS), 234-255 (VSVI…LVEM), 256-279 (KNLN…IGRL), 281-303 (NVTV…VGEM), and 304-327 (VSVE…ICQL). A glycan (N-linked (GlcNAc...) asparagine) is linked at Asn-281. Residue Asn-332 is glycosylated (N-linked (GlcNAc...) asparagine). Disordered regions lie at residues 389–502 (GRSV…PPPP), 515–610 (PPVY…YSPP), and 663–748 (PPPP…PVIG). Pro residues-rich tracts occupy residues 394 to 415 (PRPP…PPAP) and 423 to 502 (LTSP…PPPP). The interval 409 to 758 (SPPPPAPIFS…VSYASPPPPP (350 aa)) is contains the Ser-Pro(4) repeats. Positions 663 to 745 (PPPPVHYSSP…SPEYEGPLPP (83 aa)) are enriched in pro residues.

Interacts with SH3P1. Post-translationally, hydroxylated on proline residues in the S-P-P-P-P repeat. In terms of processing, O-glycosylated on hydroxyprolines. In terms of tissue distribution, expressed in roots, stems, leaves and flowers, mostly in vascular tissues.

It is found in the secreted. The protein resides in the cell wall. Functionally, modulates cell morphogenesis by regulating cell wall formation and assembly, and/or growth polarization. The chain is Leucine-rich repeat extensin-like protein 3 (LRX3) from Arabidopsis thaliana (Mouse-ear cress).